A 241-amino-acid polypeptide reads, in one-letter code: MSQADLNKHKNADPSELNNFNQLANTWWDESGEFGALHKINPLRIEFIKQFQSIENKTILDVGCGGGILSESLAKAGGNVTGIDLAEDVLTIARLHSLDTETKVNYHLISAEDHAQTHEEEYDIVTCMEMLEHVPDPASIIHAAAKAVKPGGWVFFSTLNRNYKSYLLAIFAAEQVLNLVPKGTHTHDKFIQPSELDAMARQAGLFLKEGAGIDFNPLLKRYRLTDRLDVNYLLAYQKSAV.

Residues R44, G63, D84, and M128 each coordinate S-adenosyl-L-methionine.

Belongs to the methyltransferase superfamily. UbiG/COQ3 family.

The catalysed reaction is a 3-demethylubiquinol + S-adenosyl-L-methionine = a ubiquinol + S-adenosyl-L-homocysteine + H(+). It carries out the reaction a 3-(all-trans-polyprenyl)benzene-1,2-diol + S-adenosyl-L-methionine = a 2-methoxy-6-(all-trans-polyprenyl)phenol + S-adenosyl-L-homocysteine + H(+). It participates in cofactor biosynthesis; ubiquinone biosynthesis. In terms of biological role, O-methyltransferase that catalyzes the 2 O-methylation steps in the ubiquinone biosynthetic pathway. The sequence is that of Ubiquinone biosynthesis O-methyltransferase from Hydrogenovibrio crunogenus (strain DSM 25203 / XCL-2) (Thiomicrospira crunogena).